A 198-amino-acid polypeptide reads, in one-letter code: Protein GrpE (198 aa).

A compositionally biased stretch (basic and acidic residues) spans M1–E21. Positions M1–N56 are disordered. Over residues G22 to A34 the composition is skewed to low complexity. The segment covering G44 to N56 has biased composition (basic and acidic residues).

The protein belongs to the GrpE family. As to quaternary structure, homodimer.

It is found in the cytoplasm. Functionally, participates actively in the response to hyperosmotic and heat shock by preventing the aggregation of stress-denatured proteins, in association with DnaK and GrpE. It is the nucleotide exchange factor for DnaK and may function as a thermosensor. Unfolded proteins bind initially to DnaJ; upon interaction with the DnaJ-bound protein, DnaK hydrolyzes its bound ATP, resulting in the formation of a stable complex. GrpE releases ADP from DnaK; ATP binding to DnaK triggers the release of the substrate protein, thus completing the reaction cycle. Several rounds of ATP-dependent interactions between DnaJ, DnaK and GrpE are required for fully efficient folding. This chain is Protein GrpE, found in Chlorobium luteolum (strain DSM 273 / BCRC 81028 / 2530) (Pelodictyon luteolum).